The sequence spans 446 residues: MSSSTSTIVAIASAAGTGGVGIVRLSGPQSRQIAVQLGVARLQPRHAHYARFRDAQGAVIDDGIALWFNAPHSFTGEDVVELQGHGSPVLLRQLVARCIELGARQARAGEFSERAFLNGKLDLAQAEAIADVIAAGDLRAARAARRALDGVFSRRVDAVAHTLTRLRIHVEAAIDFADEPLDTLGGNQVRDGLTQARTLLAQLLRDAERGRTLRDGLHAVLIGPPNAGKSSLLNALAGSDRAIVTDVAGTTRDTLHEAIQLDGFELTLVDTAGLRDGGDAIEREGMRRARAELERADLALVVLDARDPQAARAAIGDAIDAVPRQLWIHNKCDLLSDAAPLDVNAIAVSAVTGQGLEQLHIRLRELALGDGVESVDGEFSARTRHVEALRRAERHVDAADLELGFEQLELAAEELRLAHEALGEITGKISADDLLGKIFSSFCIGK.

(6S)-5-formyl-5,6,7,8-tetrahydrofolate-binding residues include arginine 24, glutamate 81, and lysine 120. The 153-residue stretch at 216 to 368 (GLHAVLIGPP…LHIRLRELAL (153 aa)) folds into the TrmE-type G domain. Asparagine 226 provides a ligand contact to K(+). GTP-binding positions include 226 to 231 (NAGKSS), 245 to 251 (TDVAGTT), and 270 to 273 (DTAG). Residue serine 230 coordinates Mg(2+). K(+) contacts are provided by threonine 245, valine 247, and threonine 250. Threonine 251 is a Mg(2+) binding site. Position 446 (lysine 446) interacts with (6S)-5-formyl-5,6,7,8-tetrahydrofolate.

It belongs to the TRAFAC class TrmE-Era-EngA-EngB-Septin-like GTPase superfamily. TrmE GTPase family. In terms of assembly, homodimer. Heterotetramer of two MnmE and two MnmG subunits. It depends on K(+) as a cofactor.

It localises to the cytoplasm. Exhibits a very high intrinsic GTPase hydrolysis rate. Involved in the addition of a carboxymethylaminomethyl (cmnm) group at the wobble position (U34) of certain tRNAs, forming tRNA-cmnm(5)s(2)U34. The chain is tRNA modification GTPase MnmE from Xanthomonas oryzae pv. oryzae (strain PXO99A).